The primary structure comprises 104 residues: Protamine-2 (104 aa).

2 positions are modified to phosphoserine: serine 8 and serine 10. Positions 23–104 (WQEQGRNGQE…SRRRRRCRRY (82 aa)) are disordered. The span at 24 to 35 (QEQGRNGQEEQG) shows a compositional bias: low complexity. A Phosphoserine modification is found at serine 37. The span at 54–104 (YRRRRCSRRRRYRIHRRRSRSCRRRRRRSCRYRRRPRRGCRSRRRRRCRRY) shows a compositional bias: basic residues.

It belongs to the protamine P2 family. In terms of assembly, interacts with TDRP. Post-translationally, proteolytic processing into mature chains is required for histone eviction during spermatogenesis. Transition proteins (TNP1 and TNP2) are required for processing. Testis.

It is found in the nucleus. Its subcellular location is the chromosome. Protamines substitute for histones in the chromatin of sperm during the haploid phase of spermatogenesis. They compact sperm DNA into a highly condensed, stable and inactive complex. The sequence is that of Protamine-2 (PRM2) from Callithrix jacchus (White-tufted-ear marmoset).